A 126-amino-acid polypeptide reads, in one-letter code: Small ribosomal subunit protein uS13 (126 aa).

The disordered stretch occupies residues 96–126; that stretch reads PVRGQRTRTNARTRRGSRRTVAGKKKPAAKK. The span at 100–126 shows a compositional bias: basic residues; sequence QRTRTNARTRRGSRRTVAGKKKPAAKK.

This sequence belongs to the universal ribosomal protein uS13 family. In terms of assembly, part of the 30S ribosomal subunit. Forms a loose heterodimer with protein S19. Forms two bridges to the 50S subunit in the 70S ribosome.

In terms of biological role, located at the top of the head of the 30S subunit, it contacts several helices of the 16S rRNA. In the 70S ribosome it contacts the 23S rRNA (bridge B1a) and protein L5 of the 50S subunit (bridge B1b), connecting the 2 subunits; these bridges are implicated in subunit movement. Contacts the tRNAs in the A and P-sites. This chain is Small ribosomal subunit protein uS13, found in Thermosynechococcus vestitus (strain NIES-2133 / IAM M-273 / BP-1).